The chain runs to 241 residues: RAD9, HUS1, RAD1-interacting nuclear orphan protein 1 (241 aa).

Residues 1–10 (MPPRKKRRQA) show a composition bias toward basic residues. The interval 1–27 (MPPRKKRRQAAQKPQLLFHQQPLEAPK) is disordered. The RAD1-binding motif signature appears at 56–62 (SWVSPQF). Disordered regions lie at residues 68–134 (SWFP…PLVP) and 157–204 (IPPD…LVTD). Residues 72-87 (GKRKHHHRDHARRSSR) show a composition bias toward basic residues. Positions 100–110 (ETPQSSASSAT) are enriched in polar residues. A D-box motif is present at residues 129–136 (GRPLVPML). A KEN box motif is present at residues 177 to 181 (LRENS). Positions 181–193 (SLPSCSLHTSTPK) are enriched in polar residues.

In terms of assembly, interacts (when phosphorylated by PLK1) with POLQ; promoting POLQ recruitment to DNA damage sites. Interacts with RAD1; interaction is direct and promotes association with the 9-1-1 (RAD9-RAD1-HUS1) complex. Interacts with RAD18. Interacts with TOPBP1. Interacts with UBE2N. In terms of processing, phosphorylated by PLK1, promoting interaction with polymerase theta (POLQ). Post-translationally, ubiquitinated and degraded by the APC/C complex upon mitotic exit.

Its subcellular location is the nucleus. The protein localises to the chromosome. Involved in microhomology-mediated end-joining (MMEJ) DNA repair by promoting recruitment of polymerase theta (POLQ) to DNA damage sites during mitosis. MMEJ is an alternative non-homologous end-joining (NHEJ) machinery that takes place during mitosis to repair double-strand breaks in DNA that originate in S-phase. Accumulates in M-phase; following phosphorylation by PLK1, interacts with POLQ, enabling its recruitment to double-strand breaks for subsequent repair. Also involved in the DNA damage response (DDR) signaling in response to genotoxic stresses such as ionizing radiation (IR) during the S phase. Recruited to sites of DNA damage through interaction with the 9-1-1 cell-cycle checkpoint response complex and TOPBP1 in a ATR-dependent manner. Required for the progression of the G1 to S phase transition. Plays a role in the stimulation of CHEK1 phosphorylation. The sequence is that of RAD9, HUS1, RAD1-interacting nuclear orphan protein 1 (RHNO1) from Bos taurus (Bovine).